A 255-amino-acid polypeptide reads, in one-letter code: Taurine import ATP-binding protein TauB (255 aa).

The 228-residue stretch at 2-229 folds into the ABC transporter domain; the sequence is LQISHLYADY…RFVAGESSRS (228 aa). Residue 34–41 participates in ATP binding; it reads GPSGCGKT.

The protein belongs to the ABC transporter superfamily. Taurine importer (TC 3.A.1.17.1) family. The complex is composed of two ATP-binding proteins (TauB), two transmembrane proteins (TauC) and a solute-binding protein (TauA).

The protein localises to the cell inner membrane. The enzyme catalyses taurine(out) + ATP + H2O = taurine(in) + ADP + phosphate + H(+). Its function is as follows. Part of the ABC transporter complex TauABC involved in taurine import. Responsible for energy coupling to the transport system. This is Taurine import ATP-binding protein TauB from Escherichia coli O6:K15:H31 (strain 536 / UPEC).